The chain runs to 487 residues: 1-aminocyclopropane-1-carboxylate synthase 1 (487 aa).

Position 286 is an N6-(pyridoxal phosphate)lysine (Lys-286).

It belongs to the class-I pyridoxal-phosphate-dependent aminotransferase family. In terms of assembly, homodimer. It depends on pyridoxal 5'-phosphate as a cofactor.

The enzyme catalyses S-adenosyl-L-methionine = 1-aminocyclopropane-1-carboxylate + S-methyl-5'-thioadenosine + H(+). The protein operates within alkene biosynthesis; ethylene biosynthesis via S-adenosyl-L-methionine; ethylene from S-adenosyl-L-methionine: step 1/2. Catalyzes the formation of 1-aminocyclopropane-1-carboxylate, a direct precursor of ethylene in higher plants. This is 1-aminocyclopropane-1-carboxylate synthase 1 (ACC1) from Oryza sativa subsp. indica (Rice).